The sequence spans 801 residues: Putative mRNA-capping enzyme P5 (801 aa).

It belongs to the phytoreovirus protein P5 family.

It localises to the virion. Its subcellular location is the host cytoplasm. The enzyme catalyses a 5'-end diphospho-ribonucleoside in mRNA + GTP + H(+) = a 5'-end (5'-triphosphoguanosine)-ribonucleoside in mRNA + diphosphate. Its pathway is mRNA processing; mRNA capping. Functionally, enzyme involved in mRNA capping (Potential). Binds to GTP and might have guanylyltransferase activity. Together with the RNA-directed RNA polymerase P1 and protein P7, forms an transcriptional complex positioned near the channels situated at each of the five-fold vertices of the core. This is Putative mRNA-capping enzyme P5 from Alopecurus aequalis (Barnyard grass).